The chain runs to 91 residues: Small ribosomal subunit protein uS19 (91 aa).

The segment at 72 to 91 (GEFSPTRKFGGHGDDKKKKK) is disordered. The span at 82–91 (GHGDDKKKKK) shows a compositional bias: basic and acidic residues.

This sequence belongs to the universal ribosomal protein uS19 family.

Protein S19 forms a complex with S13 that binds strongly to the 16S ribosomal RNA. The sequence is that of Small ribosomal subunit protein uS19 from Spiroplasma kunkelii.